The chain runs to 350 residues: Ferredoxin--NADP reductase (350 aa).

Residues aspartate 49, glutamine 57, tyrosine 62, valine 102, phenylalanine 136, aspartate 303, and threonine 344 each contribute to the FAD site.

It belongs to the ferredoxin--NADP reductase type 2 family. Homodimer. It depends on FAD as a cofactor.

It carries out the reaction 2 reduced [2Fe-2S]-[ferredoxin] + NADP(+) + H(+) = 2 oxidized [2Fe-2S]-[ferredoxin] + NADPH. The chain is Ferredoxin--NADP reductase from Granulibacter bethesdensis (strain ATCC BAA-1260 / CGDNIH1).